A 141-amino-acid polypeptide reads, in one-letter code: MDPLSVFFLVVAAAAVCTLLLQAYAVYENFDSILEFNDAHASLEYSKSLGGSYIDKHVFDPNDGVADVTQKWRCALYGKVYVSASAFGFYAQPDGSKRTFSTRDDCVDFTFGTADTSRVVNPCTDPNGAQAEDCAFLKSVL.

The helical; Signal-anchor for type II membrane protein transmembrane segment at 1–21 (MDPLSVFFLVVAAAAVCTLLL) threads the bilayer. The Virion surface segment spans residues 22-140 (QAYAVYENFD…AEDCAFLKSV (119 aa)).

Belongs to the poxviridae A28 protein family. Contains two intramolecular disulfide bonds. They are created by the viral disulfide bond formation pathway, a poxvirus-specific pathway that operates on the cytoplasmic side of the MV membranes.

The protein resides in the virion membrane. In terms of biological role, envelope protein required for virus entry into host cell and for cell-cell fusion (syncytium formation). The chain is Envelope protein A28 homolog from Molluscum contagiosum virus subtype 1 (MOCV).